The sequence spans 421 residues: Dihydroorotase (421 aa).

The Zn(2+) site is built by histidine 60 and histidine 62. Substrate-binding positions include 62-64 (HFR) and asparagine 94. 3 residues coordinate Zn(2+): aspartate 151, histidine 178, and histidine 231. Asparagine 277 provides a ligand contact to substrate. Residue aspartate 304 coordinates Zn(2+). Residue aspartate 304 is part of the active site. A substrate-binding site is contributed by histidine 308.

It belongs to the metallo-dependent hydrolases superfamily. DHOase family. Class I DHOase subfamily. It depends on Zn(2+) as a cofactor.

The enzyme catalyses (S)-dihydroorotate + H2O = N-carbamoyl-L-aspartate + H(+). It participates in pyrimidine metabolism; UMP biosynthesis via de novo pathway; (S)-dihydroorotate from bicarbonate: step 3/3. In terms of biological role, catalyzes the reversible cyclization of carbamoyl aspartate to dihydroorotate. The chain is Dihydroorotase from Clostridioides difficile (strain 630) (Peptoclostridium difficile).